The sequence spans 99 residues: Co-chaperonin GroES (99 aa).

The protein belongs to the GroES chaperonin family. In terms of assembly, heptamer of 7 subunits arranged in a ring. Interacts with the chaperonin GroEL.

The protein resides in the cytoplasm. Functionally, together with the chaperonin GroEL, plays an essential role in assisting protein folding. The GroEL-GroES system forms a nano-cage that allows encapsulation of the non-native substrate proteins and provides a physical environment optimized to promote and accelerate protein folding. GroES binds to the apical surface of the GroEL ring, thereby capping the opening of the GroEL channel. In Corynebacterium glutamicum (strain R), this protein is Co-chaperonin GroES.